A 599-amino-acid polypeptide reads, in one-letter code: Elongation factor 4 (599 aa).

The tr-type G domain occupies 2-184 (KHIRNFSIIA…RLVRDIPPPE (183 aa)). GTP is bound by residues 14-19 (DHGKST) and 131-134 (NKID).

Belongs to the TRAFAC class translation factor GTPase superfamily. Classic translation factor GTPase family. LepA subfamily.

Its subcellular location is the cell inner membrane. The catalysed reaction is GTP + H2O = GDP + phosphate + H(+). Required for accurate and efficient protein synthesis under certain stress conditions. May act as a fidelity factor of the translation reaction, by catalyzing a one-codon backward translocation of tRNAs on improperly translocated ribosomes. Back-translocation proceeds from a post-translocation (POST) complex to a pre-translocation (PRE) complex, thus giving elongation factor G a second chance to translocate the tRNAs correctly. Binds to ribosomes in a GTP-dependent manner. The polypeptide is Elongation factor 4 (Erwinia tasmaniensis (strain DSM 17950 / CFBP 7177 / CIP 109463 / NCPPB 4357 / Et1/99)).